The primary structure comprises 80 residues: Pigment-dispersing hormone type 2 (80 aa).

The N-terminal stretch at 1 to 23 (MARCFVVLAFLALAAMSLQVATA) is a signal peptide. An Alanine amide modification is found at Ala77.

It belongs to the arthropod PDH family. As to expression, eyestalk.

Its subcellular location is the secreted. In terms of biological role, the pigment-dispersing hormone causes the migration of the distal retinal pigment into the proximal end of the pigment chromatophore cells and thus decreases the amount of light entering the retinulas. May also function as a neurotransmitter and/or neuromodulator. The polypeptide is Pigment-dispersing hormone type 2 (PDH2) (Penaeus vannamei (Whiteleg shrimp)).